The primary structure comprises 296 residues: MLRVLTSTLRFPRPWKPLETRGCSSNPGAAGREIQVCALAGPNQGIAEILMNRPSARNALGNVFVSQLLEALAQLREDRQVRVLIFRSGVKGVFCAGADLKEREQMSEAEVGLFVQRLRGLMTEIAAFPAPTIAAMDGFALGGGLELALACDLRVAASSAVMGLIETTRGLLPGAGGTQRLPRCLGVALAKELIFTGRRLSGAQAQALGLVNHAVAQNEEGNAAYHRARALAQEILPQAPIAVRLSKVAIDRGIEVDIASGMAIEGICYAQNIPTRDRLEGMAAFREKRLPRFVGE.

At Lys101 the chain carries N6-acetyllysine; alternate. Lys101 carries the N6-succinyllysine; alternate modification.

Belongs to the enoyl-CoA hydratase/isomerase family.

The protein resides in the mitochondrion. The chain is Enoyl-CoA hydratase domain-containing protein 2, mitochondrial (ECHDC2) from Bos taurus (Bovine).